The primary structure comprises 183 residues: uncharacterized protein (183 aa).

This is an uncharacterized protein from Acanthamoeba polyphaga mimivirus (APMV).